The primary structure comprises 2159 residues: Calpain-type cysteine protease DEK1 (2159 aa).

The N-terminal stretch at 1-33 is a signal peptide; it reads MEGEGHHGVVLACSICGFLFAVLSPFSFWVLWA. At 34–70 the chain is on the extracellular side; that stretch reads VNWRPWRLYSWIYARKWPTYVQGPQLSTLCSLLTLCA. The helical transmembrane segment at 71 to 91 threads the bilayer; that stretch reads WLVVISPIAVLLVWGSVLIAL. Residues 92–95 are Cytoplasmic-facing; that stretch reads MERN. A helical membrane pass occupies residues 96–116; that stretch reads IIGLAVIMAGVALLLSFYSIM. The Extracellular portion of the chain corresponds to 117–127; sequence LWWRTQWQSSE. The chain crosses the membrane as a helical span at residues 128–148; that stretch reads AVAYLLLLAVCLLCAYDFCAI. Residues 149-164 lie on the Cytoplasmic side of the membrane; the sequence is YVTAGASASELNSPSG. A helical transmembrane segment spans residues 165–185; that stretch reads FFFGVSVISLAINMLFICKIL. Over 186 to 236 the chain is Extracellular; that stretch reads FNVSGFDVDEYVRRSYKFAYSDCVEVAPVSCSPEPPDPSELYMTKSSRVKH. Residues 237 to 257 traverse the membrane as a helical segment; sequence LGLLYISSLLVLVGYSILYGL. At 258–264 the chain is on the cytoplasmic side; sequence TSKEARW. A helical transmembrane segment spans residues 265–285; it reads LGALTSVAVVILDWNLGLCSF. Residues 286–294 are Extracellular-facing; the sequence is RFELLKSRM. The chain crosses the membrane as a helical span at residues 295–315; it reads IVLFVAGTSRAFLVSFGVHYW. The Cytoplasmic portion of the chain corresponds to 316-320; the sequence is YLGHC. The helical transmembrane segment at 321–341 threads the bilayer; it reads ISYAFVASVLLSAAVSSWLSI. Topologically, residues 342-623 are extracellular; the sequence is SNPSVARIDA…LIFHHLAGSP (282 aa). Residues 365–409 form a disordered region; sequence RKGQNSSSNSSEGCGSSVKRSSGSVEAGQNGNAMDSMYRSNSQSD. Low complexity predominate over residues 369-381; it reads NSSSNSSEGCGSS. Residues 382–409 show a composition bias toward polar residues; the sequence is VKRSSGSVEAGQNGNAMDSMYRSNSQSD. A helical transmembrane segment spans residues 624-644; it reads IRAFIVFTVMFIIETATVAIY. Over 645–660 the chain is Cytoplasmic; the sequence is RPETIKVINATHEQFE. The helical transmembrane segment at 661 to 681 threads the bilayer; the sequence is FGFSILLLSPVVCSIMAFIWS. Topologically, residues 682-694 are extracellular; it reads LRAEEMLMTSKPQ. Residues 695–715 form a helical membrane-spanning segment; sequence KYGFIAWLLSTCVGLFLSFLS. Residues 716 to 719 are Cytoplasmic-facing; it reads KSSV. A helical transmembrane segment spans residues 720–740; that stretch reads ILGLSLTVPLMVACLSFAVPI. Over 741–770 the chain is Extracellular; sequence WIRNGYSFWIPGREFANRENVSQAPGEKER. Residues 771 to 791 form a helical membrane-spanning segment; the sequence is ALFVITIAVFTASIIGLGAIV. At 792 to 822 the chain is on the cytoplasmic side; it reads SAKPLDALGYKGWDADKNSSYSPYATSMYLG. A helical membrane pass occupies residues 823–843; the sequence is WALSSTIAVITTGLIPIVAWF. At 844–853 the chain is on the extracellular side; sequence ATYRFSPSSA. Residues 854–874 form a helical membrane-spanning segment; it reads ICVGLFATVLVSFCGASYWGV. Residues 875-887 are Cytoplasmic-facing; it reads VNSREDGVPLKAD. A helical transmembrane segment spans residues 888–908; it reads FLAALLPLLCIPAFFSLFTGL. Residues 909–921 are Extracellular-facing; that stretch reads YKWKDDDWKISRG. A helical membrane pass occupies residues 922–942; the sequence is VYLFVGMGMLLLFGAVAAVIV. Over 943 to 946 the chain is Cytoplasmic; sequence TIRP. Residues 947–967 traverse the membrane as a helical segment; the sequence is WTVGVACLVAILFLVFVIGVI. Over 968 to 981 the chain is Extracellular; sequence HYWTSNNFYLTRTQ. A helical transmembrane segment spans residues 982-1002; the sequence is MLLVCSIAFLLALAAFLMGLF. The Cytoplasmic segment spans residues 1003 to 1016; sequence HGKPFVGASIGYFS. A helical transmembrane segment spans residues 1017–1037; sequence FIFLLTGRALTVLLSPPIVVY. Topologically, residues 1038–1060 are extracellular; the sequence is SPRVLPVYVYDAHADSAKNVSYA. Residues 1061–1081 traverse the membrane as a helical segment; that stretch reads FLILYGIALATEVWGVIASLI. Over 1082–2159 the chain is Cytoplasmic; the sequence is MNPPFVGAGV…SKASIRLEAV (1078 aa). Phosphoserine is present on residues S1371 and S1376. The Calpain catalytic 1 domain maps to 1417 to 1609; sequence TGRHCGELDL…MSPAEYGFFD (193 aa). S1665 bears the Phosphoserine mark. Residues 1703-2005 form the Calpain catalytic 2 domain; that stretch reads NFTDQEFPPE…FRSIYVCRVY (303 aa). Residues C1769, H1927, and N1947 contribute to the active site.

This sequence belongs to the peptidase C2 family. In terms of processing, autocatalytic proteolytic cleavage leading to the production of mainly cytoplasmic localized subproducts of about 85 and 120 kDa. Expressed in most tissues at low levels ranging from 30 to 55 ppm. Present in all endosperm cells at transcript level, but confined to aleurones at protein level.

Its subcellular location is the endoplasmic reticulum membrane. The protein localises to the cytoplasm. It is found in the cell membrane. The protein resides in the endosome membrane. In terms of biological role, essential protease involved in epiderm development. Required for aleurone cell development in the endosperm probably by maintaining and restricting the aleurone and embryonic epidermal L1 cell-layer fates as well as meristems organization. Involved in the maintenance of adaxial/abaxial axis information in developing leaves, probably by regulating cell proliferation and expansion. Does not need calcium ions to be active. The chain is Calpain-type cysteine protease DEK1 (DEK1) from Zea mays (Maize).